A 300-amino-acid polypeptide reads, in one-letter code: D-alanine--D-alanine ligase (300 aa).

The 195-residue stretch at Lys-99–Lys-293 folds into the ATP-grasp domain. Ile-126–Thr-181 is an ATP binding site. Positions 248, 260, and 262 each coordinate Mg(2+).

This sequence belongs to the D-alanine--D-alanine ligase family. Mg(2+) serves as cofactor. It depends on Mn(2+) as a cofactor.

The protein resides in the cytoplasm. The enzyme catalyses 2 D-alanine + ATP = D-alanyl-D-alanine + ADP + phosphate + H(+). The protein operates within cell wall biogenesis; peptidoglycan biosynthesis. Its function is as follows. Cell wall formation. This Clostridium botulinum (strain Langeland / NCTC 10281 / Type F) protein is D-alanine--D-alanine ligase.